Reading from the N-terminus, the 198-residue chain is Ribonuclease HII (198 aa).

One can recognise an RNase H type-2 domain in the interval 14-198 (GVIAGVDEVG…RNFAPISRAL (185 aa)). Positions 20, 21, and 112 each coordinate a divalent metal cation.

It belongs to the RNase HII family. It depends on Mn(2+) as a cofactor. Mg(2+) serves as cofactor.

It localises to the cytoplasm. It catalyses the reaction Endonucleolytic cleavage to 5'-phosphomonoester.. Functionally, endonuclease that specifically degrades the RNA of RNA-DNA hybrids. In Wolbachia sp. subsp. Drosophila simulans (strain wRi), this protein is Ribonuclease HII.